A 611-amino-acid chain; its full sequence is Podocan (611 aa).

A signal peptide spans 1-23 (MAGSRGLPLLLLVLQLFLGPVLP). The LRRNT domain occupies 60–97 (PEPGPATVDCPRDCACSQEGVVDCGGIDLREFPGDLPE). LRR repeat units follow at residues 98–119 (HTNHLSLQNNQLEKIYPEELSR), 122–145 (RLETLNLQNNRLTSRGLPEEAFEH), 148–169 (SLNYLYLANNKLTLAPRFLPNA), 170–190 (LISVDFAANYLTKIYGLTFGQ), and 193–213 (NLRSVYLHNNKLADAGLPDHM). An N-linked (GlcNAc...) asparagine glycan is attached at Asn215. 15 LRR repeats span residues 219–239 (NVEILILSSNFLRHVPKHLPP), 240–261 (ALYKLHLKNNKLEKIPPGAFSE), 264–284 (NLRELYLQNNYLTDEGLDNET), 290–311 (SLEYLDLSSNNLSRVPAGLPRS), 312–332 (LVLLHLEKNAIQSVEADVLTP), 335–358 (NLEYLLLHSNQLQAKGIHPLAFQG), 361–382 (KLHTVHLYNNALERVPSGLPRR), 383–403 (VRTLMILHNQITGIGREDFAT), 406–427 (FLEELNLSYNRITSPQMHRDAF), 432–453 (LLRSLDLSGNRLQTLPPGLPKN), 477–490 (QLRELYLTGNRLRS), 503–523 (GLQLLDIAGNQLTEVPEGLPP), 524–545 (SLEYLYLQNNKISAVPANAFDS), 548–569 (NLKGIFLRFNKLAVGSVVESAF), and 574–583 (HLQVLDIEGN). Asn282 carries an N-linked (GlcNAc...) asparagine glycan. The N-linked (GlcNAc...) asparagine glycan is linked to Asn411. The tract at residues 585–611 (EFGNGSKDKDEEEEEEEEEEDEEEETR) is disordered. Residues 594–611 (DEEEEEEEEEEDEEEETR) are compositionally biased toward acidic residues.

Belongs to the small leucine-rich proteoglycan (SLRP) family. SLRP class V subfamily. In terms of assembly, binds to type I collagen. In terms of processing, N-glycosylated. As to expression, kidney. Expressed in podocytes and likely vascular endothelial cells within the glomerulus.

The protein localises to the secreted. Its subcellular location is the extracellular space. It localises to the extracellular matrix. Its function is as follows. Negatively regulates cell proliferation and cell migration, especially in smooth muscle cells. The chain is Podocan (Podn) from Mus musculus (Mouse).